The following is a 131-amino-acid chain: Small ribosomal subunit protein uS8 (131 aa).

Belongs to the universal ribosomal protein uS8 family. As to quaternary structure, part of the 30S ribosomal subunit. Contacts proteins S5 and S12.

In terms of biological role, one of the primary rRNA binding proteins, it binds directly to 16S rRNA central domain where it helps coordinate assembly of the platform of the 30S subunit. The sequence is that of Small ribosomal subunit protein uS8 from Erythrobacter litoralis (strain HTCC2594).